A 110-amino-acid chain; its full sequence is Parvalbumin alpha (110 aa).

The residue at position 2 (Ser2) is an N-acetylserine. Residues Ser2 and Ser24 each carry the phosphoserine modification. EF-hand domains are found at residues 39–74 and 78–110; these read KSAD…FSPD and LSAK…VAES. Residues Asp52, Asp54, Ser56, Phe58, Glu60, Glu63, Asp91, Asp93, Asp95, Lys97, and Glu102 each contribute to the Ca(2+) site.

Its function is as follows. In muscle, parvalbumin is thought to be involved in relaxation after contraction. It binds two calcium ions. This chain is Parvalbumin alpha (PVALB), found in Homo sapiens (Human).